The primary structure comprises 460 residues: Protein btn1 (460 aa).

A run of 11 helical transmembrane segments spans residues 42–62 (VCVA…VILS), 76–96 (VVLL…PYFI), 105–125 (IIIF…SPPY), 135–155 (LAGI…FVGL), 164–184 (LAAW…AYAL), 195–215 (ATLL…FMVL), 287–307 (GLFF…YTIN), 323–343 (FAHF…GVFI), 356–376 (LYLP…QAVF), 378–398 (FIPS…LGGL), and 428–448 (AAGI…LCDW).

Belongs to the battenin family.

It localises to the vacuole membrane. Its function is as follows. Involved in vacuolar transport and vacuole pH homeostasis. Also required for cytokinesis. This is Protein btn1 (btn1) from Aspergillus fumigatus (strain ATCC MYA-4609 / CBS 101355 / FGSC A1100 / Af293) (Neosartorya fumigata).